The following is a 473-amino-acid chain: Cysteine--tRNA ligase (473 aa).

C28 is a Zn(2+) binding site. A 'HIGH' region motif is present at residues 30-40 (VTVYDLCHLGH). Residues C213, H238, and E242 each contribute to the Zn(2+) site. The short motif at 270-274 (KMSKS) is the 'KMSKS' region element. Residue K273 coordinates ATP.

Belongs to the class-I aminoacyl-tRNA synthetase family. In terms of assembly, monomer. Zn(2+) is required as a cofactor.

Its subcellular location is the cytoplasm. The enzyme catalyses tRNA(Cys) + L-cysteine + ATP = L-cysteinyl-tRNA(Cys) + AMP + diphosphate. The sequence is that of Cysteine--tRNA ligase from Blochmanniella pennsylvanica (strain BPEN).